Here is a 195-residue protein sequence, read N- to C-terminus: MRNDDDQEEKKTELPLGKETEANLFKSRSIFIYGTITQELAQKVCSQLVALAAASDDDIRLFVNSPGGHVESGDSIHDMIKFVKPKVWTIGTGWVASAGALIYVAAPKEQRLCLPNTRFLLHQPSGGTRGMASDIEIQAREIIKMNERLNRIFSEATGQPVDKIAKDTDRDYWLGAEEAKAYGLVSRIVTSIAEI.

Residue Ser97 is the Nucleophile of the active site. His122 is an active-site residue.

This sequence belongs to the peptidase S14 family. Fourteen ClpP subunits assemble into 2 heptameric rings which stack back to back to give a disk-like structure with a central cavity, resembling the structure of eukaryotic proteasomes.

The protein localises to the cytoplasm. The catalysed reaction is Hydrolysis of proteins to small peptides in the presence of ATP and magnesium. alpha-casein is the usual test substrate. In the absence of ATP, only oligopeptides shorter than five residues are hydrolyzed (such as succinyl-Leu-Tyr-|-NHMec, and Leu-Tyr-Leu-|-Tyr-Trp, in which cleavage of the -Tyr-|-Leu- and -Tyr-|-Trp bonds also occurs).. Its function is as follows. Cleaves peptides in various proteins in a process that requires ATP hydrolysis. Has a chymotrypsin-like activity. Plays a major role in the degradation of misfolded proteins. The protein is ATP-dependent Clp protease proteolytic subunit 3 of Rhizobium meliloti (strain 1021) (Ensifer meliloti).